Consider the following 550-residue polypeptide: Proteasome-associated ATPase (550 aa).

Residues 9–48 (EELARRVASLSAQNERLAQILVEARSKIVGLQQQIDDLAQ) are a coiled coil. ATP is bound at residue 233-238 (GCGKTL). Residues 528 to 550 (KGEGKNPTPAKAIETPHNTGPYL) are disordered. The segment at 549-550 (YL) is docks into pockets in the proteasome alpha-ring.

The protein belongs to the AAA ATPase family. Homohexamer. Assembles into a hexameric ring structure that caps the 20S proteasome core. Strongly interacts with the prokaryotic ubiquitin-like protein Pup through a hydrophobic interface; the interacting region of ARC lies in its N-terminal coiled-coil domain. There is one Pup binding site per ARC hexamer ring. Upon ATP-binding, the C-terminus of ARC interacts with the alpha-rings of the proteasome core, possibly by binding to the intersubunit pockets.

It functions in the pathway protein degradation; proteasomal Pup-dependent pathway. ATPase which is responsible for recognizing, binding, unfolding and translocation of pupylated proteins into the bacterial 20S proteasome core particle. May be essential for opening the gate of the 20S proteasome via an interaction with its C-terminus, thereby allowing substrate entry and access to the site of proteolysis. Thus, the C-termini of the proteasomal ATPase may function like a 'key in a lock' to induce gate opening and therefore regulate proteolysis. The protein is Proteasome-associated ATPase of Jonesia denitrificans (strain ATCC 14870 / DSM 20603 / BCRC 15368 / CIP 55.134 / JCM 11481 / NBRC 15587 / NCTC 10816 / Prevot 55134) (Listeria denitrificans).